Consider the following 217-residue polypeptide: Enolase-phosphatase E1 (217 aa).

The Mg(2+) site is built by Asp-9 and Glu-11. Substrate is bound by residues 112-113 and Lys-151; that span reads SS. Asp-176 contacts Mg(2+).

Belongs to the HAD-like hydrolase superfamily. MasA/MtnC family. As to quaternary structure, monomer. The cofactor is Mg(2+).

The protein resides in the cytoplasm. It localises to the nucleus. The catalysed reaction is 5-methylsulfanyl-2,3-dioxopentyl phosphate + H2O = 1,2-dihydroxy-5-(methylsulfanyl)pent-1-en-3-one + phosphate. It functions in the pathway amino-acid biosynthesis; L-methionine biosynthesis via salvage pathway; L-methionine from S-methyl-5-thio-alpha-D-ribose 1-phosphate: step 3/6. It participates in amino-acid biosynthesis; L-methionine biosynthesis via salvage pathway; L-methionine from S-methyl-5-thio-alpha-D-ribose 1-phosphate: step 4/6. Functionally, bifunctional enzyme that catalyzes the enolization of 2,3-diketo-5-methylthiopentyl-1-phosphate (DK-MTP-1-P) into the intermediate 2-hydroxy-3-keto-5-methylthiopentenyl-1-phosphate (HK-MTPenyl-1-P), which is then dephosphorylated to form the acireductone 1,2-dihydroxy-3-keto-5-methylthiopentene (DHK-MTPene). This chain is Enolase-phosphatase E1, found in Lachancea thermotolerans (strain ATCC 56472 / CBS 6340 / NRRL Y-8284) (Yeast).